Here is an 81-residue protein sequence, read N- to C-terminus: Photosystem I iron-sulfur center (81 aa).

4Fe-4S ferredoxin-type domains follow at residues 2-31 (SHSVKIYDTCIGCTQCVRACPTDVLEMIPW) and 39-68 (IASAPRTEDCVGCKRCESACPTDFLSVRVY). Residues Cys-11, Cys-14, Cys-17, Cys-21, Cys-48, Cys-51, Cys-54, and Cys-58 each contribute to the [4Fe-4S] cluster site.

The eukaryotic PSI reaction center is composed of at least 11 subunits. Requires [4Fe-4S] cluster as cofactor.

Its subcellular location is the plastid. The protein resides in the chloroplast thylakoid membrane. It carries out the reaction reduced [plastocyanin] + hnu + oxidized [2Fe-2S]-[ferredoxin] = oxidized [plastocyanin] + reduced [2Fe-2S]-[ferredoxin]. Apoprotein for the two 4Fe-4S centers FA and FB of photosystem I (PSI); essential for photochemical activity. FB is the terminal electron acceptor of PSI, donating electrons to ferredoxin. The C-terminus interacts with PsaA/B/D and helps assemble the protein into the PSI complex. Required for binding of PsaD and PsaE to PSI. PSI is a plastocyanin-ferredoxin oxidoreductase, converting photonic excitation into a charge separation, which transfers an electron from the donor P700 chlorophyll pair to the spectroscopically characterized acceptors A0, A1, FX, FA and FB in turn. In Vitis vinifera (Grape), this protein is Photosystem I iron-sulfur center.